We begin with the raw amino-acid sequence, 562 residues long: NAD-dependent malic enzyme (562 aa).

Tyr101 (proton donor) is an active-site residue. An NAD(+)-binding site is contributed by Arg154. Catalysis depends on Lys172, which acts as the Proton acceptor. A divalent metal cation-binding residues include Glu243, Asp244, and Asp267. Residues Asp267 and Asn415 each contribute to the NAD(+) site.

Belongs to the malic enzymes family. Homotetramer. The cofactor is Mg(2+). It depends on Mn(2+) as a cofactor.

The enzyme catalyses (S)-malate + NAD(+) = pyruvate + CO2 + NADH. It carries out the reaction oxaloacetate + H(+) = pyruvate + CO2. The chain is NAD-dependent malic enzyme from Shewanella sp. (strain MR-4).